Reading from the N-terminus, the 507-residue chain is Polygalacturonase (507 aa).

A signal peptide spans 1–20 (MSMKFMAALAFLALQLIVMA). The propeptide occupies 21-54 (AGEDQSAQIMLDSDTKQYHRSSRNLRKRVHHARH). 6 PbH1 repeats span residues 215-241 (CDGVKIQGIKIKAPRDSPNTDGIDIFA), 242-263 (SKRFEIEKCTIGTGDDCVAVGT), 265-285 (SSNITIKDLTCGPGHGMSIGS), 295-316 (VSFVHLDGAKFIDTQNGLRIKT), 324-345 (ASHITYENVEMINAENPILINQ), and 358-385 (RSAVKIQDVTFKNIHGTSATTAAIQLMC). Residue D256 is the Proton donor of the active site. A glycan (N-linked (GlcNAc...) asparagine) is linked at N267. The active site involves H279.

Belongs to the glycosyl hydrolase 28 family.

It is found in the secreted. The protein localises to the cell wall. The enzyme catalyses (1,4-alpha-D-galacturonosyl)n+m + H2O = (1,4-alpha-D-galacturonosyl)n + (1,4-alpha-D-galacturonosyl)m.. The polypeptide is Polygalacturonase (JNA2) (Juniperus ashei (Ozark white cedar)).